The chain runs to 482 residues: GTPase Der (482 aa).

2 consecutive EngA-type G domains span residues P3–F166 and I195–T368. Residues G9–S16, D56–I60, N118–D121, G201–S208, D248–V252, and N313–D316 each bind GTP. The KH-like domain occupies K369 to A453.

Belongs to the TRAFAC class TrmE-Era-EngA-EngB-Septin-like GTPase superfamily. EngA (Der) GTPase family. Associates with the 50S ribosomal subunit.

Functionally, GTPase that plays an essential role in the late steps of ribosome biogenesis. This Pseudoalteromonas atlantica (strain T6c / ATCC BAA-1087) protein is GTPase Der.